Reading from the N-terminus, the 616-residue chain is Dihydroxy-acid dehydratase (616 aa).

Aspartate 81 contacts Mg(2+). Cysteine 122 serves as a coordination point for [2Fe-2S] cluster. Mg(2+) is bound by residues aspartate 123 and lysine 124. An N6-carboxylysine modification is found at lysine 124. A [2Fe-2S] cluster-binding site is contributed by cysteine 195. Mg(2+) is bound at residue glutamate 491. Serine 517 serves as the catalytic Proton acceptor.

The protein belongs to the IlvD/Edd family. In terms of assembly, homodimer. Requires [2Fe-2S] cluster as cofactor. Mg(2+) is required as a cofactor.

It carries out the reaction (2R)-2,3-dihydroxy-3-methylbutanoate = 3-methyl-2-oxobutanoate + H2O. The catalysed reaction is (2R,3R)-2,3-dihydroxy-3-methylpentanoate = (S)-3-methyl-2-oxopentanoate + H2O. It functions in the pathway amino-acid biosynthesis; L-isoleucine biosynthesis; L-isoleucine from 2-oxobutanoate: step 3/4. The protein operates within amino-acid biosynthesis; L-valine biosynthesis; L-valine from pyruvate: step 3/4. Its function is as follows. Functions in the biosynthesis of branched-chain amino acids. Catalyzes the dehydration of (2R,3R)-2,3-dihydroxy-3-methylpentanoate (2,3-dihydroxy-3-methylvalerate) into 2-oxo-3-methylpentanoate (2-oxo-3-methylvalerate) and of (2R)-2,3-dihydroxy-3-methylbutanoate (2,3-dihydroxyisovalerate) into 2-oxo-3-methylbutanoate (2-oxoisovalerate), the penultimate precursor to L-isoleucine and L-valine, respectively. The sequence is that of Dihydroxy-acid dehydratase from Escherichia fergusonii (strain ATCC 35469 / DSM 13698 / CCUG 18766 / IAM 14443 / JCM 21226 / LMG 7866 / NBRC 102419 / NCTC 12128 / CDC 0568-73).